Reading from the N-terminus, the 126-residue chain is Aspartate 1-decarboxylase (126 aa).

Residue Ser-25 is the Schiff-base intermediate with substrate; via pyruvic acid of the active site. At Ser-25 the chain carries Pyruvic acid (Ser). A substrate-binding site is contributed by Thr-57. The Proton donor role is filled by Tyr-58. 73-75 contacts substrate; that stretch reads GAA.

The protein belongs to the PanD family. As to quaternary structure, heterooctamer of four alpha and four beta subunits. It depends on pyruvate as a cofactor. Post-translationally, is synthesized initially as an inactive proenzyme, which is activated by self-cleavage at a specific serine bond to produce a beta-subunit with a hydroxyl group at its C-terminus and an alpha-subunit with a pyruvoyl group at its N-terminus.

The protein localises to the cytoplasm. The enzyme catalyses L-aspartate + H(+) = beta-alanine + CO2. Its pathway is cofactor biosynthesis; (R)-pantothenate biosynthesis; beta-alanine from L-aspartate: step 1/1. Catalyzes the pyruvoyl-dependent decarboxylation of aspartate to produce beta-alanine. This Pseudomonas fluorescens protein is Aspartate 1-decarboxylase.